We begin with the raw amino-acid sequence, 300 residues long: Peptidyl-prolyl cis-trans isomerase E (300 aa).

Residues 6–84 enclose the RRM domain; it reads RTIYVGGLAD…RTIRVNLAKP (79 aa). The 157-residue stretch at 142–298 folds into the PPIase cyclophilin-type domain; sequence FFDIRIGGND…QKIVIYSCGE (157 aa).

This sequence belongs to the cyclophilin-type PPIase family. PPIase E subfamily.

The protein localises to the nucleus. It catalyses the reaction [protein]-peptidylproline (omega=180) = [protein]-peptidylproline (omega=0). In terms of biological role, PPIases accelerate the folding of proteins. It catalyzes the cis-trans isomerization of proline imidic peptide bonds in oligopeptides. Combines RNA-binding and PPIase activities. The protein is Peptidyl-prolyl cis-trans isomerase E (cyp33) of Drosophila melanogaster (Fruit fly).